The chain runs to 78 residues: Small ribosomal subunit protein uS17 (78 aa).

This sequence belongs to the universal ribosomal protein uS17 family. As to quaternary structure, part of the 30S ribosomal subunit.

One of the primary rRNA binding proteins, it binds specifically to the 5'-end of 16S ribosomal RNA. This chain is Small ribosomal subunit protein uS17, found in Pelagibacter ubique (strain HTCC1062).